The sequence spans 201 residues: Holliday junction branch migration complex subunit RuvA (201 aa).

The interval 1–63 (MIGCLIGEVF…EDAQQLYGFI (63 aa)) is domain I. The domain II stretch occupies residues 64 to 142 (DAQEKLIFRT…ALSVQATTGS (79 aa)). The flexible linker stretch occupies residues 143–152 (TVTSAQIQFS). The domain III stretch occupies residues 152–201 (SSNSPIAEAEAALQSLGYKPIEAQKAIAAVKADYTEAADLIRAALKSMMK).

Belongs to the RuvA family. Homotetramer. Forms an RuvA(8)-RuvB(12)-Holliday junction (HJ) complex. HJ DNA is sandwiched between 2 RuvA tetramers; dsDNA enters through RuvA and exits via RuvB. An RuvB hexamer assembles on each DNA strand where it exits the tetramer. Each RuvB hexamer is contacted by two RuvA subunits (via domain III) on 2 adjacent RuvB subunits; this complex drives branch migration. In the full resolvosome a probable DNA-RuvA(4)-RuvB(12)-RuvC(2) complex forms which resolves the HJ.

It is found in the cytoplasm. The RuvA-RuvB-RuvC complex processes Holliday junction (HJ) DNA during genetic recombination and DNA repair, while the RuvA-RuvB complex plays an important role in the rescue of blocked DNA replication forks via replication fork reversal (RFR). RuvA specifically binds to HJ cruciform DNA, conferring on it an open structure. The RuvB hexamer acts as an ATP-dependent pump, pulling dsDNA into and through the RuvAB complex. HJ branch migration allows RuvC to scan DNA until it finds its consensus sequence, where it cleaves and resolves the cruciform DNA. The sequence is that of Holliday junction branch migration complex subunit RuvA from Acinetobacter baylyi (strain ATCC 33305 / BD413 / ADP1).